A 188-amino-acid polypeptide reads, in one-letter code: Phosphatidylinositol N-acetylglucosaminyltransferase subunit H (188 aa).

The protein belongs to the PIGH family. In terms of assembly, component of the glycosylphosphatidylinositol-N-acetylglucosaminyltransferase (GPI-GnT) complex composed at least by PIGA, PIGC, PIGH, PIGP, PIGQ, PIGY and DPM2. Interacts with PIGQ.

The protein resides in the cytoplasm. It participates in glycolipid biosynthesis; glycosylphosphatidylinositol-anchor biosynthesis. Part of the glycosylphosphatidylinositol-N-acetylglucosaminyltransferase (GPI-GnT) complex that catalyzes the transfer of N-acetylglucosamine from UDP-N-acetylglucosamine to phosphatidylinositol and participates in the first step of GPI biosynthesis. This is Phosphatidylinositol N-acetylglucosaminyltransferase subunit H from Homo sapiens (Human).